Here is a 770-residue protein sequence, read N- to C-terminus: Amyloid-beta precursor protein (770 aa).

Residues 1-17 form the signal peptide; the sequence is MLPGLALLLLAAWTARA. Residues 18–701 are Extracellular-facing; the sequence is LEVPTDGNAG…AEDVGSNKGA (684 aa). The GFLD subdomain stretch occupies residues 28–123; sequence LLAEPQIAMF…PYRCLVGEFV (96 aa). Residues 28–189 form the E1 domain; the sequence is LLAEPQIAMF…RGVEFVCCPL (162 aa). 6 disulfide bridges follow: Cys38–Cys62, Cys73–Cys117, Cys98–Cys105, Cys133–Cys187, Cys144–Cys174, and Cys158–Cys186. 96–110 serves as a coordination point for heparin; the sequence is NWCKRGRKQCKTHPH. Residues 131–189 are cuBD subdomain; it reads DKCKFLHQERMDVCETHLHWHTVAKETCSEKSTNLHDYGMLLPCGIDKFRGVEFVCCPL. Positions 147, 151, and 168 each coordinate Cu(2+). Residues 181–188 form a zinc-binding region; the sequence is GVEFVCCP. Zn(2+)-binding residues include Glu183, Cys186, and Cys187. The segment covering 194 to 207 has biased composition (acidic residues); the sequence is DNVDSADAEEDDSD. The tract at residues 194-284 is disordered; sequence DNVDSADAEE…TTTTTTESVE (91 aa). Position 198 is a phosphoserine; by CK2 (Ser198). The residue at position 206 (Ser206) is a Phosphoserine; by CK1. Sulfotyrosine occurs at positions 217 and 262. A compositionally biased stretch (acidic residues) spans 228 to 264; sequence VAEEEEVAEVEEEEADDDEDDEDGDEVEEEAEEPYEE. The segment covering 268–281 has biased composition (low complexity); that stretch reads RTTSIATTTTTTTE. 3 disulfides stabilise this stretch: Cys291/Cys341, Cys300/Cys324, and Cys316/Cys337. Residues 291–341 form the BPTI/Kunitz inhibitor domain; it reads CSEQAETGPCRAMISRWYFDVTEGKCAPFFYGGCGGNRNNFDTEEYCMAVC. Tyr336 is modified (sulfotyrosine). Residues 344-365 carry the OX-2 motif; it reads VMSQSLRKTTREPLTRDPVKLP. The region spanning 374–565 is the E2 domain; it reads AVDKYLETPG…EEIQDEVDEL (192 aa). The segment at 391-423 is heparin-binding; it reads FQKAKERLEAKHRERMSQVMREWEEAERQAKNL. Ser441 is subject to Phosphoserine. The interval 491–522 is heparin-binding; sequence FNMLKKYVRAEQKDRQHTLKHFEHVRMVDPKK. Phosphotyrosine is present on Tyr497. Residues 523-540 form a collagen-binding region; that stretch reads AAQIRSQVMTHLRVIYER. N-linked (GlcNAc...) asparagine glycosylation is found at Asn542 and Asn571. His677, Tyr681, His684, and His685 together coordinate Cu(2+). Residues His677, Tyr681, His684, and His685 each coordinate Zn(2+). Residues 695 to 722 are interaction with PSEN1; the sequence is VGSNKGAIIGLMVGGVVIATVIVITLVM. The helical transmembrane segment at 702-722 threads the bilayer; it reads IIGLMVGGVVIATVIVITLVM. Over 723–770 the chain is Cytoplasmic; that stretch reads LKKKQYTSIHHGVVEVDAAVTPEERHLSKMQQNGYENPTYKFFEQMQN. Residues 724 to 734 carry the Basolateral sorting signal motif; it reads KKKQYTSIHHG. Thr729 bears the Phosphothreonine mark. Ser730 is modified (phosphoserine; by APP-kinase I). The tract at residues 732-751 is interaction with G(o)-alpha; sequence HHGVVEVDAAVTPEERHLSK. Thr743 bears the Phosphothreonine; by CDK5 and MAPK10 mark. Residues 756–770 form a required for the interaction with KIF5B and for anterograde transport in axons region; it reads GYENPTYKFFEQMQN. Tyr757 is modified (phosphotyrosine; by ABL1). A YENPXY motif; contains endocytosis signal motif is present at residues 757 to 762; it reads YENPTY. Residue Lys763 forms a Glycyl lysine isopeptide (Lys-Gly) (interchain with G-Cter in ubiquitin) linkage.

Belongs to the APP family. Binds, via its C-terminus, to the PID domain of several cytoplasmic proteins, including APBB family members, the APBA family, MAPK8IP1, SHC1 and NUMB and DAB1. Binding to DAB1 inhibits its serine phosphorylation. Interacts (via NPXY motif) with DAB2 (via PID domain); the interaction is impaired by tyrosine phosphorylation of the NPXY motif. Also interacts with GPCR-like protein BPP, APPBP1, IB1, KNS2 (via its TPR domains), APPBP2 (via BaSS) and DDB1. In vitro, it binds MAPT via the MT-binding domains. Associates with microtubules in the presence of ATP and in a kinesin-dependent manner. Interacts, through a C-terminal domain, with GNAO1. Amyloid-beta protein 42 binds CHRNA7 in hippocampal neurons. Amyloid-beta associates with HADH2. Interacts with CPEB1, ANKS1B and AGER. Interacts with ITM2B. Interacts with ITM2C. Interacts with IDE. Can form homodimers; dimerization is enhanced in the presence of Cu(2+) ions. Can form homodimers; this is promoted by heparin binding. Amyloid-beta protein 40 interacts with S100A9. CTF-alpha product of APP interacts with GSAP. Isoform APP695 interacts with SORL1 (via N-terminal ectodomain); this interaction retains APP in the trans-Golgi network and reduces processing into soluble APP-alpha and amyloid-beta peptides. Isoform APP770 interacts with SORL1. The C99 fragment also interacts with SORL1. Interacts with PLD3. Interacts with VDAC1. Interacts with NSG1; could regulate APP processing. Amyloid-beta protein 42 interacts with FPR2. Interacts (via transmembrane region) with PSEN1; the interaction is direct. Interacts with LRRK2. Interacts (via cytoplasmic domain) with KIF5B. Interacts (via C-terminus) with APBB2/FE65L1 (via C-terminus). Interacts (via intracellular domain) with APBB3. Post-translationally, proteolytically processed under normal cellular conditions. Cleavage either by alpha-secretase, beta-secretase or theta-secretase leads to generation and extracellular release of soluble APP peptides, S-APP-alpha and S-APP-beta, and the retention of corresponding membrane-anchored C-terminal fragments, C80, C83 and C99. Subsequent processing of C80 and C83 by gamma-secretase yields P3 peptides. This is the major secretory pathway and is non-amyloidogenic. Alternatively, presenilin/nicastrin-mediated gamma-secretase processing of C99 releases the amyloid-beta proteins, amyloid-beta protein 40 and amyloid-beta protein 42, major components of amyloid plaques, and the cytotoxic C-terminal fragments, gamma-CTF(50), gamma-CTF(57) and gamma-CTF(59). PSEN1 cleavage is more efficient with C83 than with C99 as substrate (in vitro). Amyloid-beta protein 40 and Amyloid-beta protein 42 are cleaved by ACE. Many other minor amyloid-beta peptides, amyloid-beta 1-X peptides, are found in cerebral spinal fluid (CSF) including the amyloid-beta X-15 peptides, produced from the cleavage by alpha-secretase. Proteolytically cleaved by caspases during neuronal apoptosis. Cleavage at Asp-739 by either caspase-3, -8 or -9 results in the production of the neurotoxic C31 peptide and the increased production of amyloid-beta peptides. In terms of processing, N- and O-glycosylated. Post-translationally, phosphorylation in the C-terminal on tyrosine, threonine and serine residues is neuron-specific. Phosphorylation can affect APP processing, neuronal differentiation and interaction with other proteins. Phosphorylated on Thr-743 in neuronal cells by Cdc5 kinase and Mapk10, in dividing cells by Cdc2 kinase in a cell-cycle dependent manner with maximal levels at the G2/M phase and, in vitro, by GSK-3-beta. The Thr-743 phosphorylated form causes a conformational change which reduces binding of Fe65 family members. In dopaminergic (DA) neurons, phosphorylation on Thr-743 by LRKK2 promotes the production and the nuclear translocation of the APP intracellular domain (AICD) which induces DA neuron apoptosis. Phosphorylation on Tyr-757 is required for SHC binding. Phosphorylated in the extracellular domain by casein kinases on both soluble and membrane-bound APP. This phosphorylation is inhibited by heparin. Trophic-factor deprivation triggers the cleavage of surface APP by beta-secretase to release sAPP-beta which is further cleaved to release an N-terminal fragment of APP (N-APP). In terms of processing, amyloid-beta peptides are degraded by IDE. Post-translationally, sulfated on tyrosine residues.

Its subcellular location is the cell membrane. The protein localises to the membrane. It localises to the perikaryon. The protein resides in the cell projection. It is found in the growth cone. Its subcellular location is the clathrin-coated pit. The protein localises to the early endosome. It localises to the cytoplasmic vesicle. The protein resides in the endoplasmic reticulum. It is found in the golgi apparatus. Its subcellular location is the secreted. The protein localises to the cell surface. It localises to the nucleus. The protein resides in the cytoplasm. In terms of biological role, functions as a cell surface receptor and performs physiological functions on the surface of neurons relevant to neurite growth, neuronal adhesion and axonogenesis. Interaction between APP molecules on neighboring cells promotes synaptogenesis. Involved in cell mobility and transcription regulation through protein-protein interactions. Can promote transcription activation through binding to APBB1-KAT5 and inhibit Notch signaling through interaction with Numb. Couples to apoptosis-inducing pathways such as those mediated by G(o) and JIP. Inhibits G(o)-alpha ATPase activity. Acts as a kinesin I membrane receptor, mediating the axonal transport of beta-secretase and presenilin 1. By acting as a kinesin I membrane receptor, plays a role in axonal anterograde transport of cargo towards synapses in axons. May be involved in copper homeostasis/oxidative stress through copper ion reduction. In vitro, copper-metallated APP induces neuronal death directly or is potentiated through Cu(2+)-mediated low-density lipoprotein oxidation. Can regulate neurite outgrowth through binding to components of the extracellular matrix such as heparin and collagen I and IV. Induces a AGER-dependent pathway that involves activation of p38 MAPK, resulting in internalization of amyloid-beta peptide and mitochondrial dysfunction in cultured cortical neurons. Provides Cu(2+) ions for GPC1 which are required for release of nitric oxide (NO) and subsequent degradation of the heparan sulfate chains on GPC1. Its function is as follows. Amyloid-beta peptides are lipophilic metal chelators with metal-reducing activity. Binds transient metals such as copper, zinc and iron. Functionally, the gamma-CTF peptides as well as the caspase-cleaved peptides, including C31, are potent enhancers of neuronal apoptosis. In Macaca fascicularis (Crab-eating macaque), this protein is Amyloid-beta precursor protein.